Consider the following 459-residue polypeptide: Zinc finger protein ZFP2 (459 aa).

13 consecutive C2H2-type zinc fingers follow at residues 100 to 122 (YGCDECGKTFRQSSSLLKHQRIH), 128 to 150 (YTCNVCDKHFIERSSLTVHQRTH), 156 to 178 (YKCHECGKAFSQSMNLTVHQRTH), 184 to 206 (YQCKECGKAFRKNSSLIQHERIH), 212 to 234 (YKCHDCGKAFTQSMNLTVHQRTH), 240 to 262 (YECNQCGKAFSQSMHLIVHQRSH), 268 to 290 (YECSECGKAFSKSSTLTLHQRNH), 296 to 318 (YKCNKCGKSFSQSTYLIEHQRLH), 324 to 346 (FECNQCGKAFSKNSSLTQHRRIH), 352 to 374 (YECMICGKHFTGRSSLTVHQVIH), 380 to 402 (YECTECGKAFSQSAYLIEHQRIH), 408 to 430 (YECDQCGKAFIKNSSLIVHQRIH), and 436 to 458 (YQCNECGKSFSRSTNLTRHQRTH).

Belongs to the krueppel C2H2-type zinc-finger protein family.

Its subcellular location is the nucleus. Probable transcription factor involved in neuronal differentiation and/or phenotypic maintenance. This chain is Zinc finger protein ZFP2 (Zfp2), found in Mus musculus (Mouse).